The sequence spans 463 residues: Major capsid protein (463 aa).

The protein belongs to the NCLDV major capsid protein family. Homotrimer.

The protein localises to the virion. Major capsid protein that self assembles to form an icosahedral capsid. Represents around 50% of the total virion protein mass. The sequence is that of Major capsid protein (MCP) from Rana tigrina ranavirus.